A 235-amino-acid chain; its full sequence is 15,16-dihydrobiliverdin:ferredoxin oxidoreductase (235 aa).

The protein belongs to the HY2 family.

The enzyme catalyses 15,16-dihydrobiliverdin + oxidized 2[4Fe-4S]-[ferredoxin] = biliverdin IXalpha + reduced 2[4Fe-4S]-[ferredoxin] + 2 H(+). In terms of biological role, catalyzes the two-electron reduction of biliverdin IX-alpha at the C15 methine bridge. In Synechococcus sp. (strain CC9605), this protein is 15,16-dihydrobiliverdin:ferredoxin oxidoreductase.